A 374-amino-acid polypeptide reads, in one-letter code: MKPFEYGDEEIGSREIGFAVSSTIIGIGALSMPRDIANQTLFSDGWIILLLGGLICAVLGWFVTRVAILFPKQNFVQYTSAHLTKPVAYTISSILVLTFAALTAYESRMISVISQTYLFSDTPIQLLSFFFLLVVIYGIAGSRAALLRLNVLFLPIVLIAIVLLSLLNINLMEINNLLPAFQTKVSQYAVGVKNSIFTFIGFEVALFYAVLLNNKTAKKAPMAVAKAVMVNVLSYILIYVTCISVFTYMTTRGLTYPTIELGKEIEIGGGFLERFDAIFFTTWIITIYNTTAMYYDVASLLFCAMFPKVKKQIFIFISAPIIFMVNMIPSSLNTLSSYGTYLAWIDMGCVVLAPLLVLIVYKIKRRNGGNETPS.

The next 10 helical transmembrane spans lie at 16 to 36 (IGFA…PRDI), 44 to 64 (DGWI…WFVT), 86 to 106 (PVAY…TAYE), 122 to 142 (TPIQ…IAGS), 149 to 169 (LNVL…LLNI), 192 to 212 (VKNS…AVLL), 227 to 247 (AVMV…SVFT), 279 to 301 (FFTT…ASLL), 313 to 333 (IFIF…SSLN), and 341 to 361 (YLAW…LIVY).

This sequence belongs to the amino acid-polyamine-organocation (APC) superfamily. Spore germination protein (SGP) (TC 2.A.3.9) family.

The protein localises to the membrane. Functionally, contributes to the L-alanine germination response. This Bacillus cereus protein is Spore germination protein GerLB (gerLB).